The chain runs to 225 residues: Membrane-spanning 4-domains subfamily A member 4D (225 aa).

Topologically, residues methionine 1–lysine 42 are cytoplasmic. Residues valine 43–isoleucine 63 traverse the membrane as a helical segment. At leucine 64 to serine 73 the chain is on the extracellular side. Residues valine 74–isoleucine 94 form a helical membrane-spanning segment. At alanine 95–threonine 113 the chain is on the cytoplasmic side. Residues isoleucine 114–valine 134 traverse the membrane as a helical segment. Residues phenylalanine 135–aspartate 148 lie on the Extracellular side of the membrane. The chain crosses the membrane as a helical span at residues valine 149–glycine 169. Over cysteine 170–valine 225 the chain is Cytoplasmic.

This sequence belongs to the MS4A family. In terms of tissue distribution, expressed in thymus, spleen, peripheral lymph node, liver, kidney, heart, colon, lung, and testes.

It is found in the membrane. May be involved in signal transduction as a component of a multimeric receptor complex. In Mus musculus (Mouse), this protein is Membrane-spanning 4-domains subfamily A member 4D (Ms4a4d).